The sequence spans 837 residues: Protein translocase subunit SecA 1 (837 aa).

Residues glutamine 85, 103 to 107 (GEGKT), and aspartate 492 each bind ATP. The span at 787–806 (QEVAKGEAVHPKEDGEEPKK) shows a compositional bias: basic and acidic residues. Residues 787–813 (QEVAKGEAVHPKEDGEEPKKKPIRKAV) form a disordered region. Zn(2+)-binding residues include cysteine 821, cysteine 823, cysteine 832, and cysteine 833.

The protein belongs to the SecA family. In terms of assembly, monomer and homodimer. Part of the essential Sec protein translocation apparatus which comprises SecA, SecYEG and auxiliary proteins SecDF. Other proteins may also be involved. Requires Zn(2+) as cofactor.

Its subcellular location is the cell membrane. The protein localises to the cytoplasm. The catalysed reaction is ATP + H2O + cellular proteinSide 1 = ADP + phosphate + cellular proteinSide 2.. Part of the Sec protein translocase complex. Interacts with the SecYEG preprotein conducting channel. Has a central role in coupling the hydrolysis of ATP to the transfer of proteins into and across the cell membrane, serving as an ATP-driven molecular motor driving the stepwise translocation of polypeptide chains across the membrane. The sequence is that of Protein translocase subunit SecA 1 from Geobacillus thermodenitrificans (strain NG80-2).